A 392-amino-acid polypeptide reads, in one-letter code: Hercynylcysteine sulfoxide lyase (392 aa).

K219 is subject to N6-(pyridoxal phosphate)lysine.

Belongs to the class-V pyridoxal-phosphate-dependent aminotransferase family. EgtE subfamily. Requires pyridoxal 5'-phosphate as cofactor.

The protein resides in the cytoplasm. It localises to the nucleus. It carries out the reaction S-(hercyn-2-yl)-L-cysteine S-oxide + AH2 + H(+) = ergothioneine + pyruvate + A + NH4(+). The protein operates within amino-acid biosynthesis; ergothioneine biosynthesis. Functionally, catalyzes the conversion of hercynylcysteine sulfoxide to ergothioneine by cleaving the cysteine residue at the sulfur atom, the last step in the biosynthesis pathway of ergothioneine. The protein is Hercynylcysteine sulfoxide lyase of Schizosaccharomyces pombe (strain 972 / ATCC 24843) (Fission yeast).